An 86-amino-acid polypeptide reads, in one-letter code: Cell division topological specificity factor (86 aa).

It belongs to the MinE family.

In terms of biological role, prevents the cell division inhibition by proteins MinC and MinD at internal division sites while permitting inhibition at polar sites. This ensures cell division at the proper site by restricting the formation of a division septum at the midpoint of the long axis of the cell. This is Cell division topological specificity factor from Alteromonas mediterranea (strain DSM 17117 / CIP 110805 / LMG 28347 / Deep ecotype).